Reading from the N-terminus, the 304-residue chain is D-alanine--D-alanine ligase (304 aa).

The ATP-grasp domain maps to K103–K299. E129 to S184 provides a ligand contact to ATP. Mg(2+) contacts are provided by D253, E266, and N268.

It belongs to the D-alanine--D-alanine ligase family. Requires Mg(2+) as cofactor. It depends on Mn(2+) as a cofactor.

The protein localises to the cytoplasm. It catalyses the reaction 2 D-alanine + ATP = D-alanyl-D-alanine + ADP + phosphate + H(+). The protein operates within cell wall biogenesis; peptidoglycan biosynthesis. Functionally, cell wall formation. This Neisseria meningitidis serogroup C / serotype 2a (strain ATCC 700532 / DSM 15464 / FAM18) protein is D-alanine--D-alanine ligase.